The sequence spans 334 residues: N-acetyl-gamma-glutamyl-phosphate reductase (334 aa).

Cys154 is an active-site residue.

This sequence belongs to the NAGSA dehydrogenase family. Type 1 subfamily.

It is found in the cytoplasm. The enzyme catalyses N-acetyl-L-glutamate 5-semialdehyde + phosphate + NADP(+) = N-acetyl-L-glutamyl 5-phosphate + NADPH + H(+). It functions in the pathway amino-acid biosynthesis; L-arginine biosynthesis; N(2)-acetyl-L-ornithine from L-glutamate: step 3/4. Its function is as follows. Catalyzes the NADPH-dependent reduction of N-acetyl-5-glutamyl phosphate to yield N-acetyl-L-glutamate 5-semialdehyde. The chain is N-acetyl-gamma-glutamyl-phosphate reductase from Vibrio parahaemolyticus serotype O3:K6 (strain RIMD 2210633).